The chain runs to 175 residues: Large ribosomal subunit protein uL10 (175 aa).

It belongs to the universal ribosomal protein uL10 family. As to quaternary structure, part of the ribosomal stalk of the 50S ribosomal subunit. The N-terminus interacts with L11 and the large rRNA to form the base of the stalk. The C-terminus forms an elongated spine to which L12 dimers bind in a sequential fashion forming a multimeric L10(L12)X complex.

Forms part of the ribosomal stalk, playing a central role in the interaction of the ribosome with GTP-bound translation factors. The chain is Large ribosomal subunit protein uL10 from Prochlorococcus marinus (strain NATL1A).